A 576-amino-acid chain; its full sequence is RING finger and SPRY domain-containing protein 1 (576 aa).

An N-terminal signal peptide occupies residues 1–16 (MIVLGWAVFLASRSLG). S50 is modified (phosphoserine). Positions 50–99 (SGTDDSVDTQQQQAENSAVPTADTRSQPRDPVRPPRRGRGPHEPRRKKQN) are disordered. Over residues 57–68 (DTQQQQAENSAV) the composition is skewed to polar residues. The span at 83–97 (PPRRGRGPHEPRRKK) shows a compositional bias: basic residues. Residues 300–483 (LFLKEGRQLT…CEFNFGAKPF (184 aa)) form the B30.2/SPRY domain. N314 carries an N-linked (GlcNAc...) asparagine glycan. An RING-type zinc finger spans residues 527 to 562 (CSLCCDEVADTQLKPCGHSDLCMDCALQLETCPLCR).

It localises to the secreted. This chain is RING finger and SPRY domain-containing protein 1 (RSPRY1), found in Macaca fascicularis (Crab-eating macaque).